Here is a 328-residue protein sequence, read N- to C-terminus: Delta(3,5)-Delta(2,4)-dienoyl-CoA isomerase, mitochondrial (328 aa).

The transit peptide at 1-33 directs the protein to the mitochondrion; it reads MAAGIVASRRLRDLLTRRLTGSNYPGLSISLRL. Substrate-binding positions include 116-120 and Gly-174; that span reads AGIDL. Lys-231 is subject to N6-succinyllysine. At Ser-268 the chain carries Phosphoserine. Residues 326–328 carry the Microbody targeting signal motif; the sequence is SKL. Lys-327 is subject to N6-acetyllysine.

Belongs to the enoyl-CoA hydratase/isomerase family. As to quaternary structure, homohexamer.

Its subcellular location is the mitochondrion. It is found in the peroxisome. It catalyses the reaction (3E,5Z)-octadienoyl-CoA = (2E,4E)-octadienoyl-CoA. It carries out the reaction (3E,5Z,8Z,11Z,14Z)-eicosapentaenoyl-CoA = (2E,4E,8Z,11Z,14Z)-eicosapentaenoyl-CoA. It functions in the pathway lipid metabolism; fatty acid beta-oxidation. In terms of biological role, isomerization of 3-trans,5-cis-dienoyl-CoA to 2-trans,4-trans-dienoyl-CoA. This chain is Delta(3,5)-Delta(2,4)-dienoyl-CoA isomerase, mitochondrial, found in Homo sapiens (Human).